The sequence spans 304 residues: MTAGAQVIANSGHDDMIHDAVLDYYGRRLATCSSDRTIKIFEIEGESQRLVETLKGHDGAVWSVAWAHPKYGNILASAGYDGKVLIWREQAGSWQRIFDFALHKASVNIVSWSPHEAGCLLACASSDGNVSVLEFKDNSWEHNIFHAHGLGVNSVSWAPATTPGSIVSSNPGPGSTGNRRFVTGGSDNLLKIWTFDPATNGYKLEREPLAGHTDWVRDVAWSPTVLQKSYIASASQDKTVRIWTSDAANPGEWKCKVLNFDAAVWRVSWSLSGNVLAASSDNNKVTLWKENLKGEWENVKTIEE.

WD repeat units lie at residues glycine 12 to valine 51, glycine 56 to isoleucine 97, leucine 102 to asparagine 143, alanine 147 to lysine 203, glycine 211 to tryptophan 253, and asparagine 259 to asparagine 298.

It belongs to the WD repeat SEC13 family. The COPII coat is composed of at least 5 proteins: the sec23/24 complex, the sec13/31 complex, and the protein vtr-7/sar1. Component of the nuclear pore complex (NPC). NPC constitutes the exclusive means of nucleocytoplasmic transport. NPCs allow the passive diffusion of ions and small molecules and the active, nuclear transport receptor-mediated bidirectional transport of macromolecules such as proteins, RNAs, ribonucleoparticles (RNPs), and ribosomal subunits across the nuclear envelope. Due to its 8-fold rotational symmetry, all subunits are present with 8 copies or multiples thereof.

The protein localises to the cytoplasmic vesicle. It is found in the COPII-coated vesicle membrane. It localises to the endoplasmic reticulum membrane. Its subcellular location is the nucleus. The protein resides in the nuclear pore complex. Its function is as follows. Component of the coat protein complex II (COPII) which promotes the formation of transport vesicles from the endoplasmic reticulum (ER). The coat has two main functions, the physical deformation of the endoplasmic reticulum membrane into vesicles and the selection of cargo molecules. It also functions as a component of the nuclear pore complex (NPC). NPC components, collectively referred to as nucleoporins (NUPs), can play the role of both NPC structural components and of docking or interaction partners for transiently associated nuclear transport factors. Nup-20/sec13 is required for efficient mRNA export from the nucleus to the cytoplasm and for correct nuclear pore biogenesis and distribution. In Neurospora crassa (strain ATCC 24698 / 74-OR23-1A / CBS 708.71 / DSM 1257 / FGSC 987), this protein is Protein transport protein sec13 (nup-20).